The chain runs to 260 residues: Dolichol-phosphate mannosyltransferase subunit 1 (260 aa).

The disordered stretch occupies residues 1–20; it reads MAAEEASRSSPRFRREPKGR. Ala2 bears the N-acetylalanine mark. Ser9 is modified (phosphoserine). Residues Pro32, Tyr34, Glu36, Ile63, Asp65, Asp118, Ala119, Asp120, Arg147, Arg234, and Lys240 each contribute to the GDP-alpha-D-mannose site. Asp120 contacts Mg(2+). Asp120 is a binding site for Mn(2+).

The protein belongs to the glycosyltransferase 2 family. Component of the dolichol-phosphate mannose (DPM) synthase complex composed of DPM1, DPM2 and DPM3; within the complex, directly interacts with DPM3. This interaction may stabilize DPM1. It depends on Mg(2+) as a cofactor. Requires Mn(2+) as cofactor. Ca(2+) is required as a cofactor.

It localises to the endoplasmic reticulum. It carries out the reaction a di-trans,poly-cis-dolichyl phosphate + GDP-alpha-D-mannose = a di-trans,poly-cis-dolichyl beta-D-mannosyl phosphate + GDP. Its pathway is protein modification; protein glycosylation. Its function is as follows. Transfers mannose from GDP-mannose to dolichol monophosphate to form dolichol phosphate mannose (Dol-P-Man) which is the mannosyl donor in pathways leading to N-glycosylation, glycosyl phosphatidylinositol membrane anchoring, and O-mannosylation of proteins; catalytic subunit of the dolichol-phosphate mannose (DPM) synthase complex. This is Dolichol-phosphate mannosyltransferase subunit 1 (DPM1) from Bos taurus (Bovine).